Reading from the N-terminus, the 216-residue chain is MQKTPKKLTALCHQQSTASCSGSNYSGSNYSGSKCFRLHRLALLACIVALPAYAVDGRVTFQGEIVSDGTCKIETDSKNRTVTLPTVGKANLSLAGQTAAPVPFSITLKECNAADAKKANLLFSGAVTKGQLYLSNAASSGKANNVGIQIVKADGTGSPINVDGSQANSEKAPDTGKEQNSTVIQPRFDYFAHYYATGAATAGEVEATATFQVQYN.

The first 19 residues, 1-19 (MQKTPKKLTALCHQQSTAS), serve as a signal peptide directing secretion. The N-palmitoyl cysteine moiety is linked to residue Cys20. A lipid anchor (S-diacylglycerol cysteine) is attached at Cys20. The interval 159–180 (PINVDGSQANSEKAPDTGKEQN) is disordered.

It belongs to the fimbrial protein family.

The protein localises to the cell membrane. It localises to the fimbrium. In terms of biological role, may be a minor structural protein required for pilus biogenesis. The polypeptide is Minor fimbrial subunit HifD (hifD) (Haemophilus influenzae).